The primary structure comprises 316 residues: tRNA pseudouridine synthase B (316 aa).

The active-site Nucleophile is the D47.

The protein belongs to the pseudouridine synthase TruB family. Type 1 subfamily.

The catalysed reaction is uridine(55) in tRNA = pseudouridine(55) in tRNA. Its function is as follows. Responsible for synthesis of pseudouridine from uracil-55 in the psi GC loop of transfer RNAs. This Aliivibrio fischeri (strain MJ11) (Vibrio fischeri) protein is tRNA pseudouridine synthase B.